A 422-amino-acid polypeptide reads, in one-letter code: Solanesyl diphosphate synthase 3, chloroplastic/mitochondrial (422 aa).

The N-terminal 32 residues, 1 to 32 (MLFTRSVARISSKFLRNRSFYGSSQSLASHRF), are a transit peptide targeting the chloroplast and mitochondrion. Isopentenyl diphosphate contacts are provided by lysine 125, arginine 128, and histidine 174. Residues aspartate 181 and aspartate 185 each coordinate Mg(2+). Arginine 190 serves as a coordination point for an all-trans-polyprenyl diphosphate. An isopentenyl diphosphate-binding site is contributed by arginine 191. An all-trans-polyprenyl diphosphate-binding residues include lysine 267, threonine 268, glutamine 305, and lysine 322.

It belongs to the FPP/GGPP synthase family. In terms of assembly, homodimer. Mg(2+) is required as a cofactor. Ubiquitous. Highest expression in seeds and shoot apical meristem.

The protein resides in the plastid. It is found in the chloroplast. The protein localises to the mitochondrion. It catalyses the reaction 5 isopentenyl diphosphate + (2E,6E,10E)-geranylgeranyl diphosphate = all-trans-nonaprenyl diphosphate + 5 diphosphate. Its function is as follows. May be involved in the supply of solanesyl diphosphate for ubiquinone-9 (UQ-9) biosynthesis in mitochondria. Synthesizes C25 to C45 medium / long-chain products depending on the type of substrate available. Can use geranyl diphosphate, farnesyl diphosphate or geranylgeranyl diphosphate as substrates, but not dimethylallyl diphosphate. This chain is Solanesyl diphosphate synthase 3, chloroplastic/mitochondrial, found in Arabidopsis thaliana (Mouse-ear cress).